A 1012-amino-acid chain; its full sequence is Roundabout homolog 4 (1012 aa).

An N-terminal signal peptide occupies residues Met1–Ala27. 2 consecutive Ig-like C2-type domains span residues Pro32–Ser132 and Glu138–Ser225. 2 disulfide bridges follow: Cys53–Cys115 and Cys159–Cys208. 2 N-linked (GlcNAc...) asparagine glycosylation sites follow: Asn201 and Asn247. 2 Fibronectin type-III domains span residues Thr249–Gln346 and Pro348–Ala443. N-linked (GlcNAc...) asparagine glycans are attached at residues Asn361, Asn390, and Asn397. Disordered regions lie at residues Thr533–Pro553 and Leu586–Ser616. Residues Ser534–Gly550 are compositionally biased toward low complexity. The segment covering Ser592–Lys601 has biased composition (pro residues). N-linked (GlcNAc...) asparagine glycosylation is found at Asn681 and Asn713. Residues His711–Val801 are disordered. Low complexity predominate over residues Leu745–Ser759. Residues Val760–Ala771 show a composition bias toward polar residues. N-linked (GlcNAc...) asparagine glycans are attached at residues Asn762 and Asn783. The segment covering Ser772 to Ser791 has biased composition (low complexity). Phosphoserine occurs at positions 814 and 947. Positions Arg980 to Ser1012 are disordered.

The protein belongs to the immunoglobulin superfamily. ROBO family. As to quaternary structure, interacts with SLIT2 and ENAH. As to expression, expressed specifically in embryo and adult vascular endothelium.

Its function is as follows. Receptor for Slit proteins, at least for SLIT2, and seems to be involved in angiogenesis and vascular patterning. May mediate the inhibition of primary endothelial cell migration by Slit proteins. Involved in the maintenance of endothelial barrier organization and function. The polypeptide is Roundabout homolog 4 (Robo4) (Mus musculus (Mouse)).